The sequence spans 69 residues: Putative membrane protein insertion efficiency factor (69 aa).

Belongs to the UPF0161 family.

Its subcellular location is the cell membrane. Could be involved in insertion of integral membrane proteins into the membrane. The protein is Putative membrane protein insertion efficiency factor of Thermoanaerobacter pseudethanolicus (strain ATCC 33223 / 39E) (Clostridium thermohydrosulfuricum).